Consider the following 201-residue polypeptide: Putative manganese efflux pump MntP 2 (201 aa).

6 consecutive transmembrane segments (helical) span residues 3–23, 39–59, 65–85, 116–136, 141–161, and 176–196; these read LISV…VSIT, IGLF…SIGI, IAAL…GKMI, LILL…SFAF, IINT…IGVM, and ILGG…HTNI.

Belongs to the MntP (TC 9.B.29) family.

Its subcellular location is the cell membrane. In terms of biological role, probably functions as a manganese efflux pump. The polypeptide is Putative manganese efflux pump MntP 2 (Clostridium botulinum (strain Hall / ATCC 3502 / NCTC 13319 / Type A)).